Here is a 51-residue protein sequence, read N- to C-terminus: Ovomucoid (51 aa).

A Kazal-like domain is found at 3–51; it reads IDCSGYPKPACTLEFFPLCGSDNQTYSNKCAFCNAAVEKNVTLNHIGEC. Intrachain disulfides connect C5–C35, C13–C32, and C21–C51. Residue N42 is glycosylated (N-linked (GlcNAc...) asparagine).

The protein localises to the secreted. This is Ovomucoid from Eudromia elegans (Elegant crested-tinamou).